The primary structure comprises 753 residues: Fatty acid oxidation complex subunit alpha (753 aa).

Positions 8-197 (SVTHPAFTLN…KMGLVDDVVP (190 aa)) are enoyl-CoA hydratase. The segment at 313-747 (RAIHRVGVLG…FYPVDANIDE (435 aa)) is 3-hydroxyacyl-CoA dehydrogenase. The interval 593 to 622 (SNPTLHSNSTKNSSPTKNGNSPAKRNSFKW) is disordered. Residues 599-614 (SNSTKNSSPTKNGNSP) are compositionally biased toward low complexity.

This sequence in the N-terminal section; belongs to the enoyl-CoA hydratase/isomerase family. It in the central section; belongs to the 3-hydroxyacyl-CoA dehydrogenase family. As to quaternary structure, heterotetramer of two alpha chains (FadJ) and two beta chains (FadI).

Its subcellular location is the cytoplasm. It catalyses the reaction a (3S)-3-hydroxyacyl-CoA = a (2E)-enoyl-CoA + H2O. The catalysed reaction is a 4-saturated-(3S)-3-hydroxyacyl-CoA = a (3E)-enoyl-CoA + H2O. It carries out the reaction a (3S)-3-hydroxyacyl-CoA + NAD(+) = a 3-oxoacyl-CoA + NADH + H(+). The enzyme catalyses (3S)-3-hydroxybutanoyl-CoA = (3R)-3-hydroxybutanoyl-CoA. Its pathway is lipid metabolism; fatty acid beta-oxidation. Functionally, catalyzes the formation of a hydroxyacyl-CoA by addition of water on enoyl-CoA. Also exhibits 3-hydroxyacyl-CoA epimerase and 3-hydroxyacyl-CoA dehydrogenase activities. This chain is Fatty acid oxidation complex subunit alpha, found in Yersinia pseudotuberculosis serotype I (strain IP32953).